A 312-amino-acid chain; its full sequence is Pectinesterase inhibitor 10 (312 aa).

An N-terminal signal peptide occupies residues 1 to 25; it reads MNILSQTQILHLSIAILLFITTSSS. Low complexity-rich tracts occupy residues 24–36 and 44–55; these read SSSL…SPSL and SPSSAPPSSLSP. Positions 24-141 are disordered; it reads SSSLSPSSSS…PSSSSSTYSN (118 aa). Residues 56-75 show a composition bias toward pro residues; sequence SSPPPLSLSPSSPPPPPPSS. Composition is skewed to low complexity over residues 76–85 and 93–104; these read SPLSSLSPSL and SPSSAPPSSLSP. Over residues 105–124 the composition is skewed to pro residues; that stretch reads SSPPPLSLSPSSPPPPPPSS. Low complexity predominate over residues 125–137; the sequence is SPLSSLSPSSSSS. N-linked (GlcNAc...) asparagine glycans are attached at residues Asn141, Asn153, Asn185, and Asn200. Cysteines 152 and 161 form a disulfide. A disulfide bridge connects residues Cys218 and Cys268.

It belongs to the PMEI family.

The protein localises to the secreted. It is found in the extracellular space. It localises to the apoplast. Its function is as follows. Pectin methylesterase (PME) inhibitor involved in the maintenance of cell wall integrity in response to necrotrophic pathogens. Modulates PME activity and pectin methylesterification during infection by Botrytis cinerea and contributes to resistance against the pathogen. The chain is Pectinesterase inhibitor 10 from Arabidopsis thaliana (Mouse-ear cress).